The sequence spans 196 residues: Ribonuclease HII (196 aa).

The region spanning 9–196 (GLVCGIDEAG…GPVARQLSLL (188 aa)) is the RNase H type-2 domain. Asp15, Glu16, and Asp107 together coordinate a divalent metal cation.

It belongs to the RNase HII family. Mn(2+) is required as a cofactor. It depends on Mg(2+) as a cofactor.

It localises to the cytoplasm. It catalyses the reaction Endonucleolytic cleavage to 5'-phosphomonoester.. Functionally, endonuclease that specifically degrades the RNA of RNA-DNA hybrids. This Dechloromonas aromatica (strain RCB) protein is Ribonuclease HII.